We begin with the raw amino-acid sequence, 194 residues long: Holliday junction branch migration complex subunit RuvA (194 aa).

Residues 1-63 are domain I; the sequence is MFEYLYGTVE…EDTYKLIGFL (63 aa). The domain II stretch occupies residues 64–142; sequence DERDRKIFEL…NLTYTEEETV (79 aa). A flexible linker region spans residues 143-147; that stretch reads SMDML. A domain III region spans residues 147–194; the sequence is LEDLVLALEGLGYNKKEIDKTLEKIDLNKFSSLEDAIKGILKNMRIGD.

Belongs to the RuvA family. As to quaternary structure, homotetramer. Forms an RuvA(8)-RuvB(12)-Holliday junction (HJ) complex. HJ DNA is sandwiched between 2 RuvA tetramers; dsDNA enters through RuvA and exits via RuvB. An RuvB hexamer assembles on each DNA strand where it exits the tetramer. Each RuvB hexamer is contacted by two RuvA subunits (via domain III) on 2 adjacent RuvB subunits; this complex drives branch migration. In the full resolvosome a probable DNA-RuvA(4)-RuvB(12)-RuvC(2) complex forms which resolves the HJ.

The protein localises to the cytoplasm. Functionally, the RuvA-RuvB-RuvC complex processes Holliday junction (HJ) DNA during genetic recombination and DNA repair, while the RuvA-RuvB complex plays an important role in the rescue of blocked DNA replication forks via replication fork reversal (RFR). RuvA specifically binds to HJ cruciform DNA, conferring on it an open structure. The RuvB hexamer acts as an ATP-dependent pump, pulling dsDNA into and through the RuvAB complex. HJ branch migration allows RuvC to scan DNA until it finds its consensus sequence, where it cleaves and resolves the cruciform DNA. This Fusobacterium nucleatum subsp. nucleatum (strain ATCC 25586 / DSM 15643 / BCRC 10681 / CIP 101130 / JCM 8532 / KCTC 2640 / LMG 13131 / VPI 4355) protein is Holliday junction branch migration complex subunit RuvA.